The following is a 510-amino-acid chain: Coatomer subunit delta (510 aa).

One can recognise an MHD domain in the interval 270 to 510 (MESVHMKIEE…TFLVDKYEIL (241 aa)).

This sequence belongs to the adaptor complexes medium subunit family. Delta-COP subfamily. As to quaternary structure, oligomeric complex that consists of at least the alpha, beta, beta', gamma, delta, epsilon and zeta subunits.

It localises to the cytoplasm. It is found in the golgi apparatus membrane. Its subcellular location is the cytoplasmic vesicle. The protein resides in the COPI-coated vesicle membrane. Its function is as follows. The coatomer is a cytosolic protein complex that binds to dilysine motifs and reversibly associates with Golgi non-clathrin-coated vesicles, which further mediate biosynthetic protein transport from the ER, via the Golgi up to the trans Golgi network. Coatomer complex is required for budding from Golgi membranes, and is essential for the retrograde Golgi-to-ER transport of dilysine-tagged proteins. In mammals, the coatomer can only be recruited by membranes associated to ADP-ribosylation factors (ARFs), which are small GTP-binding proteins; the complex also influences the Golgi structural integrity, as well as the processing, activity, and endocytic recycling of LDL receptors. The protein is Coatomer subunit delta (ARCN1) of Gallus gallus (Chicken).